The chain runs to 312 residues: Heme oxygenase 2 (312 aa).

At Ser2 the chain carries N-acetylserine. At Ser2 the chain carries Phosphoserine. His41 contacts heme b. HRM repeat units follow at residues Lys260–Ala265 and Ser277–Ala282. An S-nitrosocysteine mark is found at Cys261 and Cys278.

The protein belongs to the heme oxygenase family. In terms of processing, S-nitrosylated by BLVRB.

It is found in the microsome. Its subcellular location is the endoplasmic reticulum. It carries out the reaction heme b + 3 reduced [NADPH--hemoprotein reductase] + 3 O2 = biliverdin IXalpha + CO + Fe(2+) + 3 oxidized [NADPH--hemoprotein reductase] + 3 H2O + H(+). In terms of biological role, heme oxygenase cleaves the heme ring at the alpha methene bridge to form biliverdin. Biliverdin is subsequently converted to bilirubin by biliverdin reductase. Under physiological conditions, the activity of heme oxygenase is highest in the spleen, where senescent erythrocytes are sequestrated and destroyed. Heme oxygenase 2 could be implicated in the production of carbon monoxide in brain where it could act as a neurotransmitter. This chain is Heme oxygenase 2 (HMOX2), found in Oryctolagus cuniculus (Rabbit).